The following is a 150-amino-acid chain: Ribonuclease H (150 aa).

An RNase H type-1 domain is found at 3–144; it reads GEDIVEIYTD…ADALARQGMA (142 aa). Mg(2+) is bound by residues aspartate 12, glutamate 50, aspartate 72, and aspartate 136.

It belongs to the RNase H family. Monomer. Mg(2+) serves as cofactor.

It is found in the cytoplasm. It catalyses the reaction Endonucleolytic cleavage to 5'-phosphomonoester.. Endonuclease that specifically degrades the RNA of RNA-DNA hybrids. The sequence is that of Ribonuclease H from Parvibaculum lavamentivorans (strain DS-1 / DSM 13023 / NCIMB 13966).